A 424-amino-acid chain; its full sequence is CinA-like protein (424 aa).

This sequence belongs to the CinA family.

The sequence is that of CinA-like protein from Prochlorococcus marinus (strain AS9601).